Reading from the N-terminus, the 512-residue chain is Cytochrome P450 monooxygenase adrA (512 aa).

Residues 12-32 (FEPVSLVGLVLLSGLFLLLTA) traverse the membrane as a helical segment. N-linked (GlcNAc...) asparagine glycosylation is found at asparagine 86, asparagine 149, and asparagine 210. Cysteine 453 lines the heme pocket.

Belongs to the cytochrome P450 family. Heme is required as a cofactor.

The protein localises to the membrane. It participates in secondary metabolite biosynthesis; terpenoid biosynthesis. Functionally, cytochrome P450 monooxygenase; part of the gene cluster that mediates the biosynthesis of andrastins, meroterpenoid compounds that exhibit inhibitory activity against ras farnesyltransferase, suggesting that they could be promising leads for antitumor agents. The first step of the pathway is the synthesis of 3,5-dimethylorsellinic acid (DMOA) by the polyketide synthase adrD via condensation of one acetyl-CoA starter unit with 3 malonyl-CoA units and 2 methylations. DMAO is then converted to farnesyl-DMAO by the prenyltransferase adrG. The methyltransferase adrK catalyzes the methylation of the carboxyl group of farnesyl-DMAO to farnesyl-DMAO methyl ester which is further converted to epoxyfarnesyl-DMAO methyl ester by the FAD-dependent monooxygenase adrH. The terpene cyclase adrI then catalyzes the carbon skeletal rearrangement to generate the andrastin E, the first compound in the pathway having the andrastin scaffold, with the tetracyclic ring system. The post-cyclization tailoring enzymes adrF, adrE, adrJ, and adrA, are involved in the conversion of andrastin E into andrastin A. The short chain dehydrogenase adrF is responsible for the oxidation of the C-3 a hydroxyl group of andrastin E to yield the corresponding ketone, andrastin D. The ketoreductase adrE stereoselectively reduces the carbonyl moiety to reverse the stereochemistry of the C-3 position to yield andrastin F. The acetyltransferase adrJ is the acetyltransferase that attaches the acetyl group to the C-3 hydroxyl group of andrastin F to yield andrastin C. Finally, the cytochrome P450 monooxygenase adrA catalyzes two sequential oxidation reactions of the C-23 methyl group, to generate the corresponding alcohol andrastin B, and aldehyde andrastin A. In Penicillium rubens (strain ATCC 28089 / DSM 1075 / NRRL 1951 / Wisconsin 54-1255) (Penicillium chrysogenum), this protein is Cytochrome P450 monooxygenase adrA.